The primary structure comprises 408 residues: Peptidase T (408 aa).

Histidine 78 serves as a coordination point for Zn(2+). Aspartate 80 is an active-site residue. Residue aspartate 140 coordinates Zn(2+). Glutamate 173 functions as the Proton acceptor in the catalytic mechanism. Positions 174, 196, and 379 each coordinate Zn(2+).

It belongs to the peptidase M20B family. Zn(2+) is required as a cofactor.

Its subcellular location is the cytoplasm. It carries out the reaction Release of the N-terminal residue from a tripeptide.. Its function is as follows. Cleaves the N-terminal amino acid of tripeptides. The sequence is that of Peptidase T from Escherichia coli O6:K15:H31 (strain 536 / UPEC).